Consider the following 80-residue polypeptide: Defensin-like protein 17 (80 aa).

An N-terminal signal peptide occupies residues 1–29 (MAKSATIITFLFAALVLFAAFEAPTMVEA). Gln-30 is subject to Pyrrolidone carboxylic acid. Intrachain disulfides connect Cys-33-Cys-80, Cys-44-Cys-65, Cys-50-Cys-74, and Cys-54-Cys-76.

This sequence belongs to the DEFL family.

It localises to the secreted. In terms of biological role, confers broad-spectrum resistance to pathogens. This chain is Defensin-like protein 17 (PDF1.2C), found in Arabidopsis thaliana (Mouse-ear cress).